The primary structure comprises 443 residues: Leucine/methionine racemase (443 aa).

Pyridoxal 5'-phosphate is bound by residues 110–111 and glutamine 247; that span reads GS. Residue lysine 273 is modified to N6-(pyridoxal phosphate)lysine. Threonine 302 contacts pyridoxal 5'-phosphate.

Belongs to the class-III pyridoxal-phosphate-dependent aminotransferase family. The cofactor is pyridoxal 5'-phosphate.

It catalyses the reaction L-leucine = D-leucine. It carries out the reaction L-methionine = D-methionine. Activity is strongly inhibited by several metal ions, including Co(2+), Zn(2+), Ni(2+), Cu(2+) and Fe(3+), and nonsubstrate amino acids such as L-arginine and L-lysine. Activity is completely abolished in the presence of hydroxylamine, an inhibitor of pyridoxal phosphate-dependent enzymes. In terms of biological role, amino acid racemase with moderate substrate specificity. Is primarily active toward leucine, which is the preferred substrate, and methionine. Also exhibits lower levels of activity toward phenylalanine, alanine and serine. In Thermococcus litoralis (strain ATCC 51850 / DSM 5473 / JCM 8560 / NS-C), this protein is Leucine/methionine racemase.